The primary structure comprises 244 residues: Secreted RxLR effector protein RXLR-C05 (244 aa).

Positions 1–21 are cleaved as a signal peptide; it reads MRGAFYVATAFLIASSTRTAA. The span at 37–46 shows a compositional bias: basic and acidic residues; the sequence is LPVGDSDTKS. Residues 37–56 are disordered; the sequence is LPVGDSDTKSLPRRSLKGSG. The RxLR-dEER motif lies at 50-68; it reads RSLKGSGDRLEIPVAEEER.

This sequence belongs to the RxLR effector family.

The protein localises to the secreted. The protein resides in the host cytoplasm. It localises to the host nucleus. Its function is as follows. Secreted effector that suppresses pattern-triggered immunity (PTI) in plant host. This is Secreted RxLR effector protein RXLR-C05 from Plasmopara halstedii (Downy mildew of sunflower).